The chain runs to 163 residues: Nucleotide-binding protein CGSHiGG_08790 (163 aa).

Belongs to the YajQ family.

Nucleotide-binding protein. The sequence is that of Nucleotide-binding protein CGSHiGG_08790 from Haemophilus influenzae (strain PittGG).